A 57-amino-acid polypeptide reads, in one-letter code: Putative secreted protein ML2569.1 (57 aa).

A signal peptide spans 1-32 (MSRIVAPAAASVVVGLLLGAATIFGMTLMVQQ). Residues 34–57 (TKPPLPGGDPQSSVLNRVEYGNRT) form a disordered region.

The chain is Putative secreted protein ML2569.1 from Mycobacterium leprae (strain TN).